Consider the following 149-residue polypeptide: D-aminoacyl-tRNA deacylase (149 aa).

A Gly-cisPro motif, important for rejection of L-amino acids motif is present at residues 137-138 (GP).

Belongs to the DTD family. Homodimer.

The protein localises to the cytoplasm. The enzyme catalyses glycyl-tRNA(Ala) + H2O = tRNA(Ala) + glycine + H(+). The catalysed reaction is a D-aminoacyl-tRNA + H2O = a tRNA + a D-alpha-amino acid + H(+). In terms of biological role, an aminoacyl-tRNA editing enzyme that deacylates mischarged D-aminoacyl-tRNAs. Also deacylates mischarged glycyl-tRNA(Ala), protecting cells against glycine mischarging by AlaRS. Acts via tRNA-based rather than protein-based catalysis; rejects L-amino acids rather than detecting D-amino acids in the active site. By recycling D-aminoacyl-tRNA to D-amino acids and free tRNA molecules, this enzyme counteracts the toxicity associated with the formation of D-aminoacyl-tRNA entities in vivo and helps enforce protein L-homochirality. The sequence is that of D-aminoacyl-tRNA deacylase from Leuconostoc mesenteroides subsp. mesenteroides (strain ATCC 8293 / DSM 20343 / BCRC 11652 / CCM 1803 / JCM 6124 / NCDO 523 / NBRC 100496 / NCIMB 8023 / NCTC 12954 / NRRL B-1118 / 37Y).